A 290-amino-acid polypeptide reads, in one-letter code: Uridine diphosphate glucose pyrophosphatase NUDT22 (290 aa).

Substrate-binding residues include Phe56, Tyr87, Arg139, Ala144, Asp151, His156, and Glu158. Residues 118–285 (ADPLGVGAAL…KGAIFLYNRV (168 aa)) enclose the Nudix hydrolase domain. A Nudix box motif is present at residues 175–196 (GELVVHELFSSVLQEICDEVNV). Positions 189 and 193 each coordinate Mg(2+). Substrate is bound at residue Ser274.

It belongs to the Nudix family. Mg(2+) serves as cofactor.

It catalyses the reaction UDP-sugar + H2O = UMP + alpha-D-aldose 1-phosphate.. Its function is as follows. Hydrolyzes UDP-glucose to glucose 1-phosphate and UMP and UDP-galactose to galactose 1-phosphate and UMP. Preferred substrate is UDP-glucose. This is Uridine diphosphate glucose pyrophosphatase NUDT22 (NUDT22) from Bos taurus (Bovine).